A 476-amino-acid polypeptide reads, in one-letter code: Ubiquinone biosynthesis monooxygenase COQ6, mitochondrial (476 aa).

Residues methionine 1 to tryptophan 35 constitute a mitochondrion transit peptide. Lysine 219 is subject to N6-succinyllysine.

This sequence belongs to the UbiH/COQ6 family. As to quaternary structure, component of a multi-subunit COQ enzyme complex, composed of at least COQ3, COQ4, COQ5, COQ6, COQ7 and COQ9. Interacts with COQ8B and COQ7. It depends on FAD as a cofactor. In terms of tissue distribution, expressed in the kidney, in podocytes.

The protein localises to the mitochondrion inner membrane. Its subcellular location is the golgi apparatus. It localises to the cell projection. The enzyme catalyses 4-hydroxy-3-(all-trans-decaprenyl)benzoate + 2 reduced [2Fe-2S]-[ferredoxin] + O2 + 2 H(+) = 3,4-dihydroxy-5-(all-trans-decaprenyl)benzoate + 2 oxidized [2Fe-2S]-[ferredoxin] + H2O. It carries out the reaction 2-methoxy-6-(all-trans-decaprenyl)phenol + 2 reduced [2Fe-2S]-[ferredoxin] + O2 + 2 H(+) = 2-methoxy-6-(all-trans-decaprenyl)benzene-1,4-diol + 2 oxidized [2Fe-2S]-[ferredoxin] + H2O. It functions in the pathway cofactor biosynthesis; ubiquinone biosynthesis. Its function is as follows. FAD-dependent monooxygenase required for two non-consecutive steps during ubiquinone biosynthesis. Required for the C5-ring hydroxylation during ubiquinone biosynthesis by catalyzing the hydroxylation of 4-hydroxy-3-(all-trans-decaprenyl)benzoic acid to 3,4-dihydroxy-5-(all-trans-decaprenyl)benzoic acid. Also acts downstream of COQ4, for the C1-hydroxylation during ubiquinone biosynthesis by catalyzing the hydroxylation of 2-methoxy-6-(all-trans-decaprenyl)phenol to 2-methoxy-6-(all-trans-decaprenyl)benzene-1,4-diol. The electrons required for the hydroxylation reaction are funneled indirectly to COQ6 from NADPH via a ferredoxin/ferredoxin reductase system composed of FDX2 and FDXR. The protein is Ubiquinone biosynthesis monooxygenase COQ6, mitochondrial of Mus musculus (Mouse).